Reading from the N-terminus, the 299-residue chain is Large ribosomal subunit protein uL18 (299 aa).

It belongs to the universal ribosomal protein uL18 family. In terms of assembly, component of the large ribosomal subunit (LSU).

The protein localises to the cytoplasm. It is found in the nucleus. In terms of biological role, component of the ribosome, a large ribonucleoprotein complex responsible for the synthesis of proteins in the cell. The small ribosomal subunit (SSU) binds messenger RNAs (mRNAs) and translates the encoded message by selecting cognate aminoacyl-transfer RNA (tRNA) molecules. The large subunit (LSU) contains the ribosomal catalytic site termed the peptidyl transferase center (PTC), which catalyzes the formation of peptide bonds, thereby polymerizing the amino acids delivered by tRNAs into a polypeptide chain. The nascent polypeptides leave the ribosome through a tunnel in the LSU and interact with protein factors that function in enzymatic processing, targeting, and the membrane insertion of nascent chains at the exit of the ribosomal tunnel. The protein is Large ribosomal subunit protein uL18 (RpL5) of Bombyx mori (Silk moth).